Reading from the N-terminus, the 243-residue chain is Pyridoxine 5'-phosphate synthase (243 aa).

Asn6 is a binding site for 3-amino-2-oxopropyl phosphate. 8 to 9 is a 1-deoxy-D-xylulose 5-phosphate binding site; it reads DH. 3-amino-2-oxopropyl phosphate is bound at residue Arg17. His42 functions as the Proton acceptor in the catalytic mechanism. 2 residues coordinate 1-deoxy-D-xylulose 5-phosphate: Arg44 and His49. The active-site Proton acceptor is Glu72. A 1-deoxy-D-xylulose 5-phosphate-binding site is contributed by Thr102. The Proton donor role is filled by His192. 3-amino-2-oxopropyl phosphate-binding positions include Gly193 and 214 to 215; that span reads GH.

It belongs to the PNP synthase family. In terms of assembly, homooctamer; tetramer of dimers.

Its subcellular location is the cytoplasm. The catalysed reaction is 3-amino-2-oxopropyl phosphate + 1-deoxy-D-xylulose 5-phosphate = pyridoxine 5'-phosphate + phosphate + 2 H2O + H(+). It participates in cofactor biosynthesis; pyridoxine 5'-phosphate biosynthesis; pyridoxine 5'-phosphate from D-erythrose 4-phosphate: step 5/5. In terms of biological role, catalyzes the complicated ring closure reaction between the two acyclic compounds 1-deoxy-D-xylulose-5-phosphate (DXP) and 3-amino-2-oxopropyl phosphate (1-amino-acetone-3-phosphate or AAP) to form pyridoxine 5'-phosphate (PNP) and inorganic phosphate. This chain is Pyridoxine 5'-phosphate synthase, found in Sulfurihydrogenibium sp. (strain YO3AOP1).